We begin with the raw amino-acid sequence, 463 residues long: Dihydrolipoyllysine-residue succinyltransferase component of 2-oxoglutarate dehydrogenase complex, mitochondrial (463 aa).

The Lipoyl-binding domain maps to 73-148; that stretch reads STSIEVPPMA…TVGEELAQVE (76 aa). The residue at position 114 (Lys114) is an N6-lipoyllysine. Residues 144-237 are disordered; it reads LAQVEPGEAP…FTPFPRTETR (94 aa). Residues 148 to 157 are compositionally biased toward low complexity; that stretch reads EPGEAPAEGS. Residues 184-212 show a composition bias toward basic and acidic residues; the sequence is TASKKEAAPKKEAAPKKEVTEPKKADQPK. 3 consecutive repeat copies span residues 185-190, 191-196, and 197-202. Residues 185-209 form a 4 X 6 AA approximate tandem repeats of A-[SP]-K-K-E-[AV] region; the sequence is ASKKEAAPKKEAAPKKEVTEPKKAD. The 4; approximate repeat unit spans residues 204–209; sequence EPKKAD. Residue Thr340 is modified to Phosphothreonine. Residues His435 and Asp439 contribute to the active site.

It belongs to the 2-oxoacid dehydrogenase family. Component of the 2-oxoglutarate dehydrogenase complex (OGDC), also called alpha-ketoglutarate dehydrogenase (KGDH) complex. The copmplex is composed of the catalytic subunits OGDH (2-oxoglutarate dehydrogenase KGD1; also called E1 subunit), DLST (dihydrolipoamide succinyltransferase KGD2; also called E2 subunit) and DLD (dihydrolipoamide dehydrogenase LPD1; also called E3 subunit), and the assembly factor KGD4. (R)-lipoate serves as cofactor.

It is found in the mitochondrion. The enzyme catalyses N(6)-[(R)-dihydrolipoyl]-L-lysyl-[protein] + succinyl-CoA = N(6)-[(R)-S(8)-succinyldihydrolipoyl]-L-lysyl-[protein] + CoA. The protein operates within amino-acid degradation; L-lysine degradation via saccharopine pathway; glutaryl-CoA from L-lysine: step 6/6. In terms of biological role, the 2-oxoglutarate dehydrogenase complex catalyzes the overall conversion of 2-oxoglutarate to succinyl-CoA and CO(2). It contains multiple copies of three enzymatic components: 2-oxoglutarate dehydrogenase (E1), dihydrolipoamide succinyltransferase (E2) and lipoamide dehydrogenase (E3). This is Dihydrolipoyllysine-residue succinyltransferase component of 2-oxoglutarate dehydrogenase complex, mitochondrial (KGD2) from Saccharomyces cerevisiae (strain ATCC 204508 / S288c) (Baker's yeast).